The sequence spans 163 residues: NADH-quinone oxidoreductase subunit I (163 aa).

4Fe-4S ferredoxin-type domains are found at residues 53–83 (LRRY…IEAG) and 94–123 (TRYD…EGPN). Cys63, Cys66, Cys69, Cys73, Cys103, Cys106, Cys109, and Cys113 together coordinate [4Fe-4S] cluster.

It belongs to the complex I 23 kDa subunit family. In terms of assembly, NDH-1 is composed of 14 different subunits. Subunits NuoA, H, J, K, L, M, N constitute the membrane sector of the complex. The cofactor is [4Fe-4S] cluster.

It is found in the cell inner membrane. It catalyses the reaction a quinone + NADH + 5 H(+)(in) = a quinol + NAD(+) + 4 H(+)(out). Functionally, NDH-1 shuttles electrons from NADH, via FMN and iron-sulfur (Fe-S) centers, to quinones in the respiratory chain. The immediate electron acceptor for the enzyme in this species is believed to be ubiquinone. Couples the redox reaction to proton translocation (for every two electrons transferred, four hydrogen ions are translocated across the cytoplasmic membrane), and thus conserves the redox energy in a proton gradient. The chain is NADH-quinone oxidoreductase subunit I from Parvibaculum lavamentivorans (strain DS-1 / DSM 13023 / NCIMB 13966).